A 124-amino-acid chain; its full sequence is Urease subunit beta (124 aa).

This sequence belongs to the urease beta subunit family. In terms of assembly, heterotrimer of UreA (gamma), UreB (beta) and UreC (alpha) subunits. Three heterotrimers associate to form the active enzyme.

It is found in the cytoplasm. It carries out the reaction urea + 2 H2O + H(+) = hydrogencarbonate + 2 NH4(+). It participates in nitrogen metabolism; urea degradation; CO(2) and NH(3) from urea (urease route): step 1/1. The sequence is that of Urease subunit beta from Halalkalibacterium halodurans (strain ATCC BAA-125 / DSM 18197 / FERM 7344 / JCM 9153 / C-125) (Bacillus halodurans).